The following is a 145-amino-acid chain: Large ribosomal subunit protein uL11 (145 aa).

The protein belongs to the universal ribosomal protein uL11 family. In terms of assembly, part of the ribosomal stalk of the 50S ribosomal subunit. Interacts with L10 and the large rRNA to form the base of the stalk. L10 forms an elongated spine to which L12 dimers bind in a sequential fashion forming a multimeric L10(L12)X complex. In terms of processing, one or more lysine residues are methylated.

Its function is as follows. Forms part of the ribosomal stalk which helps the ribosome interact with GTP-bound translation factors. The protein is Large ribosomal subunit protein uL11 of Rickettsia felis (strain ATCC VR-1525 / URRWXCal2) (Rickettsia azadi).